The primary structure comprises 554 residues: Guanine nucleotide-binding protein alpha-2 subunit (554 aa).

2 disordered regions span residues 1-139 (MGLC…NNSN) and 157-183 (VNGN…THSG). The N-myristoyl glycine moiety is linked to residue Gly-2. Cys-4 carries S-palmitoyl cysteine lipidation. Basic and acidic residues-rich tracts occupy residues 7-17 (KDSRESTHDGG) and 28-43 (ANRR…DKKQ). A compositionally biased stretch (low complexity) spans 52 to 66 (GSIVNAASNINNSSS). Over residues 67 to 85 (GKTKISTVSEDGTVSNGVG) the composition is skewed to polar residues. A compositionally biased stretch (low complexity) spans 91–139 (DNANNKNNGNNNNSNNNDNNNNNNNNIGNNINGNNNNDSENIHDSNNSN). Positions 228–554 (NALKVLLLGS…ENSLKDSGVL (327 aa)) constitute a G-alpha domain. The G1 motif stretch occupies residues 231–244 (KVLLLGSGESGKST). GTP is bound by residues Glu-239, Ser-240, Gly-241, Lys-242, Ser-243, Thr-244, Asp-351, Ile-376, Thr-382, Gly-405, Asn-471, Lys-472, Asp-474, and Ala-526. Position 243 (Ser-243) interacts with Mg(2+). Residues 374 to 382 (DVIRTRKKT) form a G2 motif region. Thr-382 is a Mg(2+) binding site. Residues 398–407 (LHFFDVGGQR) form a G3 motif region. Residues 467 to 474 (VLFLNKID) form a G4 motif region. The G5 motif stretch occupies residues 524–529 (TQATDT).

The protein belongs to the G-alpha family. In terms of assembly, g proteins are composed of 3 units; alpha, beta and gamma. The alpha chain contains the guanine nucleotide binding site. Requires Mg(2+) as cofactor.

Its function is as follows. Guanine nucleotide-binding proteins (G proteins) are involved as modulators or transducers in various transmembrane signaling systems. This protein may be involved in the determination of the cAMP level according to nutritional conditions, most probably as a regulator of adenylyl cyclase. In Kluyveromyces lactis (strain ATCC 8585 / CBS 2359 / DSM 70799 / NBRC 1267 / NRRL Y-1140 / WM37) (Yeast), this protein is Guanine nucleotide-binding protein alpha-2 subunit (GPA2).